The chain runs to 323 residues: Dof zinc finger protein DOF3.6 (323 aa).

The Dof-type zinc finger occupies 76–130 (LNCPRCDSTNTKFCYFNNYSLTQPRHFCKTCRRYWTRGGSLRNVPVGGGFRRNKR). Residues Cys-78, Cys-81, Cys-103, and Cys-106 each coordinate Zn(2+). Disordered regions lie at residues 121 to 160 (VGGGFRRNKRSKSRSKSTVVVSTDNTTSTSSLTSRPSYSN) and 304 to 323 (GGNSSWTGFTSNNSTGHLSF). The span at 126–135 (RRNKRSKSRS) shows a compositional bias: basic residues. The span at 136 to 159 (KSTVVVSTDNTTSTSSLTSRPSYS) shows a compositional bias: low complexity.

As to quaternary structure, interacts with OBF4. As to expression, predominantly expressed in roots.

The protein resides in the nucleus. In terms of biological role, transcription factor that binds specifically to a 5'-AA[AG]G-3' consensus core sequence. Enhances the DNA binding of OBF transcription factors to OCS elements. This chain is Dof zinc finger protein DOF3.6 (DOF3.6), found in Arabidopsis thaliana (Mouse-ear cress).